A 177-amino-acid chain; its full sequence is Ubiquinol-cytochrome c reductase iron-sulfur subunit (177 aa).

Residues M18–V38 form a helical membrane-spanning segment. The Rieske domain maps to A88–R175. [2Fe-2S] cluster contacts are provided by C120, H122, C139, and H142. Residues C125 and C141 are joined by a disulfide bond.

This sequence belongs to the Rieske iron-sulfur protein family. The main subunits of complex b-c1 are: cytochrome b, cytochrome c1 and the Rieske protein. [2Fe-2S] cluster serves as cofactor.

The protein localises to the cell membrane. The enzyme catalyses a quinol + 2 Fe(III)-[cytochrome c](out) = a quinone + 2 Fe(II)-[cytochrome c](out) + 2 H(+)(out). Its function is as follows. Component of the ubiquinol-cytochrome c reductase complex (complex III or cytochrome b-c1 complex), which is a respiratory chain that generates an electrochemical potential coupled to ATP synthesis. This chain is Ubiquinol-cytochrome c reductase iron-sulfur subunit (petA), found in Rickettsia conorii (strain ATCC VR-613 / Malish 7).